The chain runs to 129 residues: MALEYPEELKYLDSHEYLRVEGDTVVVGVTSYAVDQLGDIVFVSLPEEGDRINRGDSFGSIESVKAVEELYAPLSGTVLSVNTVAVEDPALIGSDPYGDGWLIKVRLADPADELGETMTAEEYRERVEG.

The 83-residue stretch at 24–106 folds into the Lipoyl-binding domain; the sequence is TVVVGVTSYA…YGDGWLIKVR (83 aa). K65 is subject to N6-lipoyllysine.

The protein belongs to the GcvH family. In terms of assembly, the glycine cleavage system is composed of four proteins: P, T, L and H. (R)-lipoate serves as cofactor.

Its function is as follows. The glycine cleavage system catalyzes the degradation of glycine. The H protein shuttles the methylamine group of glycine from the P protein to the T protein. This Gloeobacter violaceus (strain ATCC 29082 / PCC 7421) protein is Glycine cleavage system H protein.